A 112-amino-acid chain; its full sequence is Protein FAM32A (112 aa).

The disordered stretch occupies residues threonine 23–aspartate 56. Residues lysine 45–aspartate 56 are compositionally biased toward basic and acidic residues.

This sequence belongs to the FAM32 family. Widely expressed, with highest level in pancreas and lowest in muscle.

Its subcellular location is the nucleus. Its function is as follows. May induce G2 arrest and apoptosis. May also increase cell sensitivity to apoptotic stimuli. In cell lines, may play a role in the inhibition of anchor-independent cell growth. This is Protein FAM32A (Fam32a) from Mus musculus (Mouse).